A 474-amino-acid polypeptide reads, in one-letter code: 3-isopropylmalate dehydratase large subunit (474 aa).

[4Fe-4S] cluster contacts are provided by C350, C411, and C414.

This sequence belongs to the aconitase/IPM isomerase family. LeuC type 1 subfamily. In terms of assembly, heterodimer of LeuC and LeuD. It depends on [4Fe-4S] cluster as a cofactor.

It carries out the reaction (2R,3S)-3-isopropylmalate = (2S)-2-isopropylmalate. It participates in amino-acid biosynthesis; L-leucine biosynthesis; L-leucine from 3-methyl-2-oxobutanoate: step 2/4. Functionally, catalyzes the isomerization between 2-isopropylmalate and 3-isopropylmalate, via the formation of 2-isopropylmaleate. The chain is 3-isopropylmalate dehydratase large subunit from Hydrogenovibrio crunogenus (strain DSM 25203 / XCL-2) (Thiomicrospira crunogena).